We begin with the raw amino-acid sequence, 230 residues long: RNA chaperone ProQ (230 aa).

Residues 105-125 (EAKARVQAQREQHQAKKREAG) are compositionally biased toward basic and acidic residues. Residues 105–182 (EAKARVQAQR…EQRKPVTDTT (78 aa)) are disordered. Positions 154 to 167 (PSRPQAARPASAPR) are enriched in low complexity. The span at 168-178 (AESRVEQRKPV) shows a compositional bias: basic and acidic residues.

Belongs to the ProQ family.

The protein resides in the cytoplasm. Its function is as follows. RNA chaperone with significant RNA binding, RNA strand exchange and RNA duplexing activities. May regulate ProP activity through an RNA-based, post-transcriptional mechanism. The sequence is that of RNA chaperone ProQ from Erwinia tasmaniensis (strain DSM 17950 / CFBP 7177 / CIP 109463 / NCPPB 4357 / Et1/99).